The following is a 455-amino-acid chain: Aminopeptidase YwaD (455 aa).

Residues 1 to 31 (MKKLLTVMTMAVLTAGTLLLPAQSVTPAAHA) form the signal peptide. Zn(2+)-binding residues include His-250, Asp-262, Glu-295, Asp-323, and His-401.

This sequence belongs to the peptidase M28 family. M28B subfamily. As to quaternary structure, monomer. It depends on Zn(2+) as a cofactor.

The protein resides in the secreted. The enzyme catalyses Release of N-terminal Arg and Lys from oligopeptides when P1' is not Pro. Also acts on arylamides of Arg and Lys.. It carries out the reaction Release of an N-terminal amino acid, preferentially leucine, but not glutamic or aspartic acids.. In terms of biological role, catalyzes the hydrolysis of a range of N-terminal amino acids. In Bacillus subtilis (strain 168), this protein is Aminopeptidase YwaD (ywaD).